The chain runs to 945 residues: Isoleucine--tRNA ligase (945 aa).

Positions 66 to 76 (PYANGDIHLGH) match the 'HIGH' region motif. Position 581 (E581) interacts with L-isoleucyl-5'-AMP. Positions 622–626 (KMSKS) match the 'KMSKS' region motif. Residue K625 participates in ATP binding. Residues C908, C911, C928, and C931 each contribute to the Zn(2+) site.

The protein belongs to the class-I aminoacyl-tRNA synthetase family. IleS type 1 subfamily. As to quaternary structure, monomer. It depends on Zn(2+) as a cofactor.

It localises to the cytoplasm. It carries out the reaction tRNA(Ile) + L-isoleucine + ATP = L-isoleucyl-tRNA(Ile) + AMP + diphosphate. Functionally, catalyzes the attachment of isoleucine to tRNA(Ile). As IleRS can inadvertently accommodate and process structurally similar amino acids such as valine, to avoid such errors it has two additional distinct tRNA(Ile)-dependent editing activities. One activity is designated as 'pretransfer' editing and involves the hydrolysis of activated Val-AMP. The other activity is designated 'posttransfer' editing and involves deacylation of mischarged Val-tRNA(Ile). The protein is Isoleucine--tRNA ligase of Paraburkholderia xenovorans (strain LB400).